A 344-amino-acid chain; its full sequence is Dihydroorotase (344 aa).

Residues His13 and His15 each contribute to the Zn(2+) site. Residues His15–Arg17 and Asn41 contribute to the substrate site. The Zn(2+) site is built by Lys99, His136, and His174. An N6-carboxylysine modification is found at Lys99. Residue His136 coordinates substrate. Leu219 serves as a coordination point for substrate. Asp247 contributes to the Zn(2+) binding site. Asp247 is a catalytic residue. Substrate-binding residues include His251 and Ala263.

It belongs to the metallo-dependent hydrolases superfamily. DHOase family. Class II DHOase subfamily. In terms of assembly, homodimer. Requires Zn(2+) as cofactor.

The enzyme catalyses (S)-dihydroorotate + H2O = N-carbamoyl-L-aspartate + H(+). The protein operates within pyrimidine metabolism; UMP biosynthesis via de novo pathway; (S)-dihydroorotate from bicarbonate: step 3/3. Functionally, catalyzes the reversible cyclization of carbamoyl aspartate to dihydroorotate. In Idiomarina loihiensis (strain ATCC BAA-735 / DSM 15497 / L2-TR), this protein is Dihydroorotase.